A 102-amino-acid polypeptide reads, in one-letter code: Small ribosomal subunit protein uS10 (102 aa).

This sequence belongs to the universal ribosomal protein uS10 family. In terms of assembly, part of the 30S ribosomal subunit.

Its function is as follows. Involved in the binding of tRNA to the ribosomes. The sequence is that of Small ribosomal subunit protein uS10 from Mycoplasma mobile (strain ATCC 43663 / 163K / NCTC 11711) (Mesomycoplasma mobile).